The chain runs to 259 residues: Indole-3-glycerol phosphate synthase (259 aa).

Belongs to the TrpC family.

The enzyme catalyses 1-(2-carboxyphenylamino)-1-deoxy-D-ribulose 5-phosphate + H(+) = (1S,2R)-1-C-(indol-3-yl)glycerol 3-phosphate + CO2 + H2O. It participates in amino-acid biosynthesis; L-tryptophan biosynthesis; L-tryptophan from chorismate: step 4/5. This is Indole-3-glycerol phosphate synthase from Rhodopirellula baltica (strain DSM 10527 / NCIMB 13988 / SH1).